The sequence spans 347 residues: Heat-inducible transcription repressor HrcA (347 aa).

This sequence belongs to the HrcA family.

Negative regulator of class I heat shock genes (grpE-dnaK-dnaJ and groELS operons). Prevents heat-shock induction of these operons. The sequence is that of Heat-inducible transcription repressor HrcA from Lactobacillus delbrueckii subsp. bulgaricus (strain ATCC BAA-365 / Lb-18).